A 247-amino-acid chain; its full sequence is MAQQVSGRQPRYKRILLKLSGEALMGSEDFGIDPKVLDRMALEVGQLVGIGVQVGLVIGGGNLFRGAALSAAGMDRVTGDHMGMLATVMNGLAMRDALERSNIPALVMSAISMVGVTDHYDRRKAIRHLNSGDVVIFSAGTGNPFFTTDSAACLRAIEIDADVVLKATKVDGVYTADPFKDPHAEKFDHLTYDEVLDRKLGVMDLTAICLCRDHKMPLRVFNMNKPGALLNIVVGGAEGTLIEEGQA.

18–21 (KLSG) is a binding site for ATP. Gly60 serves as a coordination point for UMP. Residues Gly61 and Arg65 each coordinate ATP. Residues Asp80 and 141–148 (TGNPFFTT) contribute to the UMP site. Positions 168, 174, and 177 each coordinate ATP.

It belongs to the UMP kinase family. In terms of assembly, homohexamer.

It is found in the cytoplasm. It catalyses the reaction UMP + ATP = UDP + ADP. It participates in pyrimidine metabolism; CTP biosynthesis via de novo pathway; UDP from UMP (UMPK route): step 1/1. With respect to regulation, inhibited by UTP. Its function is as follows. Catalyzes the reversible phosphorylation of UMP to UDP. The protein is Uridylate kinase of Pseudomonas putida (strain ATCC 47054 / DSM 6125 / CFBP 8728 / NCIMB 11950 / KT2440).